We begin with the raw amino-acid sequence, 416 residues long: Gamma-glutamyl phosphate reductase (416 aa).

Belongs to the gamma-glutamyl phosphate reductase family.

Its subcellular location is the cytoplasm. It carries out the reaction L-glutamate 5-semialdehyde + phosphate + NADP(+) = L-glutamyl 5-phosphate + NADPH + H(+). The protein operates within amino-acid biosynthesis; L-proline biosynthesis; L-glutamate 5-semialdehyde from L-glutamate: step 2/2. Its function is as follows. Catalyzes the NADPH-dependent reduction of L-glutamate 5-phosphate into L-glutamate 5-semialdehyde and phosphate. The product spontaneously undergoes cyclization to form 1-pyrroline-5-carboxylate. In Streptococcus uberis (strain ATCC BAA-854 / 0140J), this protein is Gamma-glutamyl phosphate reductase.